Consider the following 174-residue polypeptide: Sarcoplasmic calcium-binding protein (174 aa).

Residue Ser1 is modified to N-acetylserine. 4 EF-hand domains span residues 3–38 (LWVQ…FAKE), 55–90 (GVWD…NAKA), 91–126 (VVEG…LGLN), and 125–160 (LNPD…FFIN). The Ca(2+) site is built by Asp16, Asp18, Asp20, and Asp27. Asp104, Asn106, Asp108, Met110, Glu115, Asp138, Asn140, Asp142, and Glu149 together coordinate Ca(2+).

In terms of biological role, like parvalbumins, SCPs seem to be more abundant in fast contracting muscles, but no functional relationship can be established from this distribution. In Perinereis vancaurica tetradentata (Sandworm), this protein is Sarcoplasmic calcium-binding protein.